The sequence spans 621 residues: 1-deoxy-D-xylulose-5-phosphate synthase (621 aa).

Residues H80 and 121 to 123 each bind thiamine diphosphate; that span reads GHS. A Mg(2+)-binding site is contributed by D152. Residues 153-154, N181, Y288, and E370 contribute to the thiamine diphosphate site; that span reads GA. N181 is a Mg(2+) binding site.

This sequence belongs to the transketolase family. DXPS subfamily. As to quaternary structure, homodimer. Mg(2+) is required as a cofactor. Requires thiamine diphosphate as cofactor.

The catalysed reaction is D-glyceraldehyde 3-phosphate + pyruvate + H(+) = 1-deoxy-D-xylulose 5-phosphate + CO2. Its pathway is metabolic intermediate biosynthesis; 1-deoxy-D-xylulose 5-phosphate biosynthesis; 1-deoxy-D-xylulose 5-phosphate from D-glyceraldehyde 3-phosphate and pyruvate: step 1/1. Functionally, catalyzes the acyloin condensation reaction between C atoms 2 and 3 of pyruvate and glyceraldehyde 3-phosphate to yield 1-deoxy-D-xylulose-5-phosphate (DXP). This chain is 1-deoxy-D-xylulose-5-phosphate synthase, found in Vibrio vulnificus (strain CMCP6).